A 433-amino-acid polypeptide reads, in one-letter code: Enolase (433 aa).

A (2R)-2-phosphoglycerate-binding site is contributed by glutamine 167. The active-site Proton donor is the glutamate 209. Residues aspartate 246, glutamate 291, and aspartate 318 each contribute to the Mg(2+) site. (2R)-2-phosphoglycerate is bound by residues lysine 343, arginine 372, serine 373, and lysine 394. Residue lysine 343 is the Proton acceptor of the active site.

It belongs to the enolase family. As to quaternary structure, component of the RNA degradosome, a multiprotein complex involved in RNA processing and mRNA degradation. It depends on Mg(2+) as a cofactor.

The protein resides in the cytoplasm. Its subcellular location is the secreted. It localises to the cell surface. It carries out the reaction (2R)-2-phosphoglycerate = phosphoenolpyruvate + H2O. Its pathway is carbohydrate degradation; glycolysis; pyruvate from D-glyceraldehyde 3-phosphate: step 4/5. In terms of biological role, catalyzes the reversible conversion of 2-phosphoglycerate (2-PG) into phosphoenolpyruvate (PEP). It is essential for the degradation of carbohydrates via glycolysis. The protein is Enolase of Vibrio vulnificus (strain CMCP6).